A 267-amino-acid polypeptide reads, in one-letter code: Tryptophan synthase alpha chain (267 aa).

Active-site proton acceptor residues include Glu49 and Asp60.

This sequence belongs to the TrpA family. As to quaternary structure, tetramer of two alpha and two beta chains.

The enzyme catalyses (1S,2R)-1-C-(indol-3-yl)glycerol 3-phosphate + L-serine = D-glyceraldehyde 3-phosphate + L-tryptophan + H2O. It participates in amino-acid biosynthesis; L-tryptophan biosynthesis; L-tryptophan from chorismate: step 5/5. In terms of biological role, the alpha subunit is responsible for the aldol cleavage of indoleglycerol phosphate to indole and glyceraldehyde 3-phosphate. The polypeptide is Tryptophan synthase alpha chain (Geotalea uraniireducens (strain Rf4) (Geobacter uraniireducens)).